Reading from the N-terminus, the 479-residue chain is Auxin transporter-like protein 1 (479 aa).

The Cytoplasmic segment spans residues 1 to 58; sequence MLSEKQGEETMMSSLNETIELNEEREEEKGASPGSGFKNFLWHGGSVYDAWFSCASNQ. The chain crosses the membrane as a helical span at residues 59–76; the sequence is VAQVLLTLPYSFSQLGMI. The Extracellular segment spans residues 77–78; that stretch reads SG. Residues 79 to 99 traverse the membrane as a helical segment; it reads IIFQVFYGLMGSWTAYLISIL. Topologically, residues 100 to 134 are cytoplasmic; the sequence is YVEYRSRKEKENVSFKNHVIQWFEVLEGLLGPYWK. A helical transmembrane segment spans residues 135 to 155; sequence AIGLAFNCTFLLFGSVIQLIA. At 156–171 the chain is on the extracellular side; the sequence is CASNIYYINDHLDKRT. Residues 172 to 192 form a helical membrane-spanning segment; it reads WTYIFGACCATTVFIPSFHNY. Over 193-195 the chain is Cytoplasmic; it reads RIW. Residues 196 to 216 traverse the membrane as a helical segment; that stretch reads SFLGLGMTTYTAWYMTIAAIV. The Extracellular segment spans residues 217 to 231; sequence HGQVENVVHSGPKKM. Residues 232–252 traverse the membrane as a helical segment; it reads VWYFTGATNILYTFGGHAVTV. Residues 253 to 265 lie on the Cytoplasmic side of the membrane; the sequence is EIMHAMWKPQKFK. The helical transmembrane segment at 266 to 286 threads the bilayer; that stretch reads AIYFFATLYVFTLTLPSAIAV. Topologically, residues 287–313 are extracellular; sequence YWAFGDQLLDHSNAFSLLPRNAWRDAG. The chain crosses the membrane as a helical span at residues 314–334; it reads VILMLIHQFITFGFACTPLYF. Over 335–355 the chain is Cytoplasmic; it reads VWEKVIGMHDTKSIFLRALAR. The helical transmembrane segment at 356-376 threads the bilayer; sequence LPVVIPIWFLAIIFPFFGPIN. A topological domain (extracellular) is located at residue S377. Residues 378–398 form a helical membrane-spanning segment; it reads AVGALLVSFTVYVIPASAHML. Over 399–421 the chain is Cytoplasmic; the sequence is TYRSASARQNAAEKLPKVIPSWT. Residues 422–442 form a helical membrane-spanning segment; the sequence is LMYVINAFVVIWVTIVGFGFG. Topologically, residues 443–479 are extracellular; that stretch reads GWASMTNFIKQVDTFGLFAKCYQCPPKLPASNHTMHH. N474 carries N-linked (GlcNAc...) asparagine glycosylation.

Belongs to the amino acid/polyamine transporter 2 family. Amino acid/auxin permease (AAAP) (TC 2.A.18.1) subfamily. Shoots and roots of nodulating plants. Higher levels in roots, flowers and stems, lower in nodules, leaves, petioles and shoot apices.

It is found in the cell membrane. Its function is as follows. Carrier protein involved in proton-driven auxin influx. Mediates the formation of auxin gradient from developing leaves (site of auxin biosynthesis) to tips by contributing to the loading of auxin in vascular tissues and facilitating acropetal (base to tip) auxin transport within inner tissues of the root apex, and basipetal (tip to base) auxin transport within outer tissues of the root apex. May be involved in lateral roots and nodules formation. The polypeptide is Auxin transporter-like protein 1 (LAX1) (Medicago truncatula (Barrel medic)).